The sequence spans 290 residues: Outer dense fiber protein 4 (290 aa).

Position 28 is a phosphoserine (serine 28). Transmembrane regions (helical) follow at residues 44-64, 125-145, 164-184, and 201-221; these read AQVV…VMVF, PVFG…FVLT, LIGI…LLLF, and IGWS…CGIL. Positions 247–290 are disordered; the sequence is GPESLVSPSQTPSSQENSQESPKDDQKPSSPDKVVSPPQPDTTG. A compositionally biased stretch (polar residues) spans 252 to 266; sequence VSPSQTPSSQENSQE.

As to expression, expressed in testis.

It is found in the membrane. Functionally, component of the outer dense fibers (ODF) of spermatozoa which could be involved in sperm tail structure, sperm movement and general organization of cellular cytoskeleton. The sequence is that of Outer dense fiber protein 4 (Odf4) from Mus musculus (Mouse).